Consider the following 236-residue polypeptide: Small ribosomal subunit protein uS3 (236 aa).

One can recognise a KH type-2 domain in the interval 39 to 107; sequence IREVLEKQLK…EVHLNIVEVR (69 aa). Positions 214-236 are disordered; that stretch reads ASERRALEGGDSGGGRSRRDDRG.

It belongs to the universal ribosomal protein uS3 family. Part of the 30S ribosomal subunit. Forms a tight complex with proteins S10 and S14.

Binds the lower part of the 30S subunit head. Binds mRNA in the 70S ribosome, positioning it for translation. This Parvibaculum lavamentivorans (strain DS-1 / DSM 13023 / NCIMB 13966) protein is Small ribosomal subunit protein uS3.